We begin with the raw amino-acid sequence, 381 residues long: Gas vesicle protein C (381 aa).

Repeat copies occupy residues 22-59, 60-84, 85-122, 123-160, 161-192, 193-232, and 233-274. The segment at 22-274 is 7 X approximate tandem repeats; sequence QAFAAYADEF…TETEVDIPPI (253 aa). The interval 261–333 is disordered; it reads AVTGTETEVD…EDDQFLDDET (73 aa). Acidic residues predominate over residues 276 to 318; sequence DSVEPDGEDEDSKADDVEAEAEVETVEMEFGAEMDTEADEDVQ.

It belongs to the halobacterial gas vesicle GvpC family. In terms of processing, detected as 2 slightly different sizes in vivo; the proteins appears larger in SDS-PAGE probably due to the acidic tail.

The protein resides in the gas vesicle. Its function is as follows. Confers stability, involved in shaping gas vesicles (GV), hollow, gas filled proteinaceous nanostructures found in some microorganisms. They allow positioning of halobacteria at the optimal depth for growth in the poorly aerated, shallow brine pools of their habitat. Functionally, expression of a 9.5 kb mc-vac DNA fragment containing 2 divergently transcribed regions (gvpD-gvpE-gvpF-gvpG-gvpH-gvpI-gvpJ-gvpK-gvpL-gvpM and gvpA-gvpC-gvpN-gvpO) allows H.volcanii to produce gas vesicles. In Haloferax mediterranei (strain ATCC 33500 / DSM 1411 / JCM 8866 / NBRC 14739 / NCIMB 2177 / R-4) (Halobacterium mediterranei), this protein is Gas vesicle protein C.